Consider the following 544-residue polypeptide: Chaperonin GroEL (544 aa).

ATP-binding positions include 29-32 (TLGP), 86-90 (DGTTT), glycine 413, 476-478 (NAA), and aspartate 492. The disordered stretch occupies residues 522–544 (PDPNANNNAAAGANPAAGMGGMM). The span at 524 to 538 (PNANNNAAAGANPAA) shows a compositional bias: low complexity.

This sequence belongs to the chaperonin (HSP60) family. In terms of assembly, forms a cylinder of 14 subunits composed of two heptameric rings stacked back-to-back. Interacts with the co-chaperonin GroES.

The protein localises to the cytoplasm. It carries out the reaction ATP + H2O + a folded polypeptide = ADP + phosphate + an unfolded polypeptide.. Together with its co-chaperonin GroES, plays an essential role in assisting protein folding. The GroEL-GroES system forms a nano-cage that allows encapsulation of the non-native substrate proteins and provides a physical environment optimized to promote and accelerate protein folding. This Lacticaseibacillus casei (strain BL23) (Lactobacillus casei) protein is Chaperonin GroEL.